The primary structure comprises 847 residues: A-kinase anchor protein 4 (847 aa).

Positions 1 to 187 (MIAYCGTTKM…MAASKNTNNN (187 aa)) are excised as a propeptide. Serine 95, serine 129, serine 189, and serine 203 each carry phosphoserine. Residues 182–204 (KNTNNNQSPSNPATKSPSNQRSV) show a composition bias toward polar residues. A disordered region spans residues 182 to 209 (KNTNNNQSPSNPATKSPSNQRSVATPDG). Threonine 206 is modified (phosphothreonine). Residues serine 212, serine 225, and serine 270 each carry the phosphoserine modification. An interaction with Prkar1a and Prkar2a region spans residues 218-231 (YYVNRLSSLVIQMA). Residue tyrosine 300 is modified to Phosphotyrosine. A phosphoserine mark is found at serine 301, serine 304, serine 340, serine 430, serine 441, serine 443, serine 462, serine 491, serine 496, and serine 503. Residues 334–343 (YANQVASDMM) form a PKA-RI subunit binding domain region. At threonine 505 the chain carries Phosphothreonine. A disordered region spans residues 511 to 536 (KQGTQGRVPNKVCPSKDEKREKISPS). The segment covering 524-533 (PSKDEKREKI) has biased composition (basic and acidic residues). Residues serine 536 and serine 581 each carry the phosphoserine modification. The segment at 583–613 (QYEKSGGGQSSKSLSMKHFESRGAPGPSTCA) is disordered. A phosphoserine mark is found at serine 626, serine 631, serine 648, serine 650, serine 674, serine 677, serine 700, and serine 729. Residues 655–677 (CCDSRSKQAAPVAKRPEDQSQDS) form a disordered region.

The protein belongs to the AKAP110 family. As to quaternary structure, interacts with PRKAR1A and PRKAR2A. Interacts with ENO4. Interacts with QRICH2. Phosphorylated by STK33 during sperm flagella assembly. Expressed in flagella of epididymal sperm.

It is found in the cell projection. The protein resides in the cilium. It localises to the flagellum. Functionally, major structural component of sperm fibrous sheath. May play a role in sperm motility. The chain is A-kinase anchor protein 4 from Rattus norvegicus (Rat).